A 447-amino-acid polypeptide reads, in one-letter code: MLTVAILAAGKGTRMASSLPKVLHKLSGKTLLQRVIDSCNELKPDKIFIIVGHKSKEVKDSVFKNNNIHFIVQKPQKGTGHAVQVLSQKVKKHDGKLIVLNGDVPLIKGETLKKLIHYHDSQKADVSLITTKKKNPHGYGRVFAKDNLIEMIIEEKDCNNVQKSNLLINAGIYCFNWKSLSKIINTIKSNNKQNEIYLTDAIYLLKKSYSFEILDNGELQGINNRVQLSKCEETIQNLIKEKHMLGGVTFINPASCTVSEESIIGKDVIIDANTHIRGNSKISNNCKIGPNTFIKDTIINENCEIINSTIFNSVLMDFVNIGPYSHIRPNCEISSYSRIGNFVEIKNSQLDKEVKVNHLSYIGDSTVGKHTNIGAGTITANFDGKKKHPTFIGENSSIGANTVLIAPINLGDSVTTGAGSVITKDSQNNSLAIARTKQVNIENWKKN.

The segment at 1–225 is pyrophosphorylase; it reads MLTVAILAAG…NGELQGINNR (225 aa). UDP-N-acetyl-alpha-D-glucosamine-binding positions include 7–10, lysine 21, glutamine 73, and 78–79; these read LAAG and GT. Aspartate 103 provides a ligand contact to Mg(2+). Residues glycine 140, glutamate 154, asparagine 169, and asparagine 223 each contribute to the UDP-N-acetyl-alpha-D-glucosamine site. Asparagine 223 is a Mg(2+) binding site. Positions 226–246 are linker; that stretch reads VQLSKCEETIQNLIKEKHMLG. The tract at residues 247 to 447 is N-acetyltransferase; sequence GVTFINPASC…QVNIENWKKN (201 aa). Residues arginine 328 and lysine 346 each contribute to the UDP-N-acetyl-alpha-D-glucosamine site. The Proton acceptor role is filled by histidine 358. 2 residues coordinate UDP-N-acetyl-alpha-D-glucosamine: tyrosine 361 and asparagine 372. The acetyl-CoA site is built by alanine 375, alanine 418, and arginine 435.

This sequence in the N-terminal section; belongs to the N-acetylglucosamine-1-phosphate uridyltransferase family. In the C-terminal section; belongs to the transferase hexapeptide repeat family. Homotrimer. Mg(2+) is required as a cofactor.

It is found in the cytoplasm. It carries out the reaction alpha-D-glucosamine 1-phosphate + acetyl-CoA = N-acetyl-alpha-D-glucosamine 1-phosphate + CoA + H(+). The catalysed reaction is N-acetyl-alpha-D-glucosamine 1-phosphate + UTP + H(+) = UDP-N-acetyl-alpha-D-glucosamine + diphosphate. The protein operates within nucleotide-sugar biosynthesis; UDP-N-acetyl-alpha-D-glucosamine biosynthesis; N-acetyl-alpha-D-glucosamine 1-phosphate from alpha-D-glucosamine 6-phosphate (route II): step 2/2. Its pathway is nucleotide-sugar biosynthesis; UDP-N-acetyl-alpha-D-glucosamine biosynthesis; UDP-N-acetyl-alpha-D-glucosamine from N-acetyl-alpha-D-glucosamine 1-phosphate: step 1/1. It functions in the pathway bacterial outer membrane biogenesis; LPS lipid A biosynthesis. Its function is as follows. Catalyzes the last two sequential reactions in the de novo biosynthetic pathway for UDP-N-acetylglucosamine (UDP-GlcNAc). The C-terminal domain catalyzes the transfer of acetyl group from acetyl coenzyme A to glucosamine-1-phosphate (GlcN-1-P) to produce N-acetylglucosamine-1-phosphate (GlcNAc-1-P), which is converted into UDP-GlcNAc by the transfer of uridine 5-monophosphate (from uridine 5-triphosphate), a reaction catalyzed by the N-terminal domain. This chain is Bifunctional protein GlmU, found in Prochlorococcus marinus (strain MIT 9515).